Consider the following 418-residue polypeptide: UDP-N-acetylglucosamine 1-carboxyvinyltransferase (418 aa).

K22–N23 lines the phosphoenolpyruvate pocket. R92 is a UDP-N-acetyl-alpha-D-glucosamine binding site. The active-site Proton donor is the C116. 2-(S-cysteinyl)pyruvic acid O-phosphothioketal is present on C116. UDP-N-acetyl-alpha-D-glucosamine-binding residues include D306 and I328.

Belongs to the EPSP synthase family. MurA subfamily.

The protein resides in the cytoplasm. It catalyses the reaction phosphoenolpyruvate + UDP-N-acetyl-alpha-D-glucosamine = UDP-N-acetyl-3-O-(1-carboxyvinyl)-alpha-D-glucosamine + phosphate. It functions in the pathway cell wall biogenesis; peptidoglycan biosynthesis. Cell wall formation. Adds enolpyruvyl to UDP-N-acetylglucosamine. This chain is UDP-N-acetylglucosamine 1-carboxyvinyltransferase, found in Shewanella amazonensis (strain ATCC BAA-1098 / SB2B).